A 118-amino-acid chain; its full sequence is MIVGHGIDLQDISAIEKVYLRNARFARKVLTDKELALFEQFSHNRKMTYLAGRWAGKEAFSKAMGTGIGQLTFQDIEIINDSKGRPVITKSPFQGKAFISISHSGGYVQASVILEDLA.

Mg(2+)-binding residues include D8 and E58.

The protein belongs to the P-Pant transferase superfamily. AcpS family. Requires Mg(2+) as cofactor.

The protein localises to the cytoplasm. The catalysed reaction is apo-[ACP] + CoA = holo-[ACP] + adenosine 3',5'-bisphosphate + H(+). Functionally, transfers the 4'-phosphopantetheine moiety from coenzyme A to a Ser of acyl-carrier-protein. The chain is Holo-[acyl-carrier-protein] synthase from Streptococcus equi subsp. zooepidemicus (strain MGCS10565).